The sequence spans 284 residues: MEAIKKKMQAMKLEKDNAIDRAEIAEQKARDANLRAEKSEEEVRGLQKKIQQIENELDQVQEQLSAANTKLEEKKKALQTAEGDVAALNRRIQLIEEDLERSEERLKIATAKLEEASQSADESERMRKMLEHRSITDEERMDGLENQLKEARMMAEDADRKYDEVARKLAMVEADLERAEERAETGESKIVELEEELRVVGNNLKSLEVSEEKAQQREEAHEQQIRIMTAKLKEAEARAEFAERSVQKLQKEVDRLEDELVHEKEKYKSISDELDQTFAELTGY.

Residues 1–273 (MEAIKKKMQA…KEKYKSISDE (273 aa)) are a coiled coil.

The protein belongs to the tropomyosin family. As to quaternary structure, homodimer. Ubiquitous, but especially prevalent in the anterior muscle bundles associated with legs. Expression in the mid and posterior regions is probably related to the numerous, small muscle bundles associated with the digestive and reproductive systems (at protein level).

In terms of biological role, tropomyosin, in association with the troponin complex, plays a central role in the calcium dependent regulation of muscle contraction. In Psoroptes ovis (Sheep scab mite), this protein is Tropomyosin.